We begin with the raw amino-acid sequence, 461 residues long: MTTRTERDTFGPIEVPADRLWGAQTQRSLQNFDIAGDRMPRELIDALARIKRASAAVNQRLGLLPADKANAVIAAADEVIAGKHPGEFPLVVWQTGSGTQSNMNMNEVLANRASELLGGERGEARLVHPNDDVNRSQSSNDVFPTAMHVAAVTAITRHLLPSLRALRETLARKAIDFDDIIKIGRTHLQDATPLTLGQEFSGYAAQLQHSETHLNAALPHLCELALGGTAVGTGLNAPAGYAEQVAAELAALTGLPFVTSPNKFETMASADGLVHAHGALKTLAASLTKIANDIRWLASGPRSGLGELSIPENEPGSSIMPGKVNPTQSEAMTMLCAQVFGNDVAVNIGGASGNFELNVFRPMIAYNFLHSARLLADGMRSFNDHCAVGIEPNRERIAELVQRSLMLVTALNPHIGYDKSAQIAKKAHKEGTSLREAALALGYVTAEQFDAWVRPEQMVGR.

Residues Ser97–Thr99, Arg125, His128–Asp131, Ser138–Asn140, and Thr186 contribute to the substrate site. Residue His187 is the Proton donor/acceptor of the active site. Ser317 is a catalytic residue. Substrate is bound by residues Ser318 and Lys323–Asn325.

This sequence belongs to the class-II fumarase/aspartase family. Fumarase subfamily. In terms of assembly, homotetramer.

Its subcellular location is the cytoplasm. The enzyme catalyses (S)-malate = fumarate + H2O. Its pathway is carbohydrate metabolism; tricarboxylic acid cycle; (S)-malate from fumarate: step 1/1. Involved in the TCA cycle. Catalyzes the stereospecific interconversion of fumarate to L-malate. The sequence is that of Fumarate hydratase class II from Ralstonia nicotianae (strain ATCC BAA-1114 / GMI1000) (Ralstonia solanacearum).